A 311-amino-acid chain; its full sequence is MSKILVFGHQNPDSDAIGSSVAFAYLAKEAWGLDTEAVALGTPNEETAYVLDYFGVQAPRVVESAKAEGVETVILTDHNEFQQSISDIKDVTVYGVVDHHRVANFETANPLYMRLEPVGSASSIVYRMFKENGVSVPKELAGLLLSGLISDTLLLKSPTTHASDIPVAKELAELAGVNLEEYGLEMLKAGTNLSSKTAAELIDIDAKTFELNGEAVRVAQVNTVDINDILARQEEIEVAIQEAIVTEGYSDFVLMITDIVNSNSEILALGSNMAKVEAAFEFTLENNHAFLAGAVSRKKQVVPQLTESYNA.

Mn(2+) is bound by residues H9, D13, D15, D77, H99, and D151.

This sequence belongs to the PPase class C family. Requires Mn(2+) as cofactor.

The protein resides in the cytoplasm. It catalyses the reaction diphosphate + H2O = 2 phosphate + H(+). The sequence is that of Probable manganese-dependent inorganic pyrophosphatase from Streptococcus agalactiae serotype Ia (strain ATCC 27591 / A909 / CDC SS700).